Here is a 200-residue protein sequence, read N- to C-terminus: Molybdopterin synthase catalytic subunit (200 aa).

A compositionally biased stretch (polar residues) spans K16–E30. A disordered region spans residues K16 to T43. The residue at position 20 (S20) is a Phosphoserine. Residues H154 to R155, K170, and K177 to E179 each bind substrate.

It belongs to the MoaE family. MOCS2B subfamily. In terms of assembly, heterotetramer; composed of 2 small (MOCS2A) and 2 large (MOCS2B) subunits.

The protein resides in the cytoplasm. It is found in the cytosol. The catalysed reaction is 2 [molybdopterin-synthase sulfur-carrier protein]-C-terminal-Gly-aminoethanethioate + cyclic pyranopterin phosphate + H2O = molybdopterin + 2 [molybdopterin-synthase sulfur-carrier protein]-C-terminal Gly-Gly + 2 H(+). It functions in the pathway cofactor biosynthesis; molybdopterin biosynthesis. In terms of biological role, catalytic subunit of the molybdopterin synthase complex, a complex that catalyzes the conversion of precursor Z into molybdopterin. Acts by mediating the incorporation of 2 sulfur atoms from thiocarboxylated MOCS2A into precursor Z to generate a dithiolene group. The protein is Molybdopterin synthase catalytic subunit of Rattus norvegicus (Rat).